Here is a 412-residue protein sequence, read N- to C-terminus: NFATC2-interacting protein (412 aa).

The tract at residues 1–38 (MAEPLRGRGPRSRGGRGARRARGARGRCPRARQSPARL) is disordered. Residues 8 to 30 (RGPRSRGGRGARRARGARGRCPR) are compositionally biased toward basic residues. Residues S49, S51, S79, S81, and S83 each carry the phosphoserine modification. The tract at residues 58–115 (VADPVEVPVARLPAPAKPEQDSDSDSEGAAEGPAGAPRTLVRRRRRRLLDPGEAPVVP) is disordered. A compositionally biased stretch (low complexity) spans 86–96 (AAEGPAGAPRT). The residue at position 118 (S118) is a Phosphoserine. K120 participates in a covalent cross-link: Glycyl lysine isopeptide (Lys-Gly) (interchain with G-Cter in SUMO2). Residues 136–206 (KLCPSEPEDE…SSRNKSRKHT (71 aa)) form a disordered region. A coiled-coil region spans residues 168–227 (RKKLRKKCEKEEKKMEEFPDQDISPLPQPSSRNKSRKHTEALQKLREVNKRLQDLRSCLS). The segment covering 175 to 184 (CEKEEKKMEE) has biased composition (basic and acidic residues). S191, S197, and S307 each carry phosphoserine. T309 and T311 each carry phosphothreonine. Positions 341–412 (LRLRVQGKEK…ESGDLIEVWG (72 aa)) constitute a Ubiquitin-like domain. A phosphoserine mark is found at S362 and S383.

Interacts with NFATC2, TRAF1, TRAF2 and PRMT1. Interacts with UBE2I/UBC9. In terms of processing, methylation at the N-terminus by PRMT1 modulates interaction with the NFAT complex and results in augmented cytokine production. In terms of tissue distribution, highest level detected in spleen, thymus and testis.

It localises to the nucleus. It is found in the cytoplasm. Functionally, in T-helper 2 (Th2) cells, regulates the magnitude of NFAT-driven transcription of a specific subset of cytokine genes, including IL3, IL4, IL5 and IL13, but not IL2. Recruits PRMT1 to the IL4 promoter; this leads to enhancement of histone H4 'Arg-3'-methylation and facilitates subsequent histone acetylation at the IL4 locus, thus promotes robust cytokine expression. Down-regulates formation of poly-SUMO chains by UBE2I/UBC9. The chain is NFATC2-interacting protein (Nfatc2ip) from Mus musculus (Mouse).